We begin with the raw amino-acid sequence, 29 residues long: Cytochrome c oxidase subunit 7A2, mitochondrial (29 aa).

Lysine 10 is subject to N6-acetyllysine.

This sequence belongs to the cytochrome c oxidase VIIa family. Component of the cytochrome c oxidase (complex IV, CIV), a multisubunit enzyme composed of 14 subunits. The complex is composed of a catalytic core of 3 subunits MT-CO1, MT-CO2 and MT-CO3, encoded in the mitochondrial DNA, and 11 supernumerary subunits COX4I, COX5A, COX5B, COX6A, COX6B, COX6C, COX7A, COX7B, COX7C, COX8 and NDUFA4, which are encoded in the nuclear genome. The complex exists as a monomer or a dimer and forms supercomplexes (SCs) in the inner mitochondrial membrane with NADH-ubiquinone oxidoreductase (complex I, CI) and ubiquinol-cytochrome c oxidoreductase (cytochrome b-c1 complex, complex III, CIII), resulting in different assemblies (supercomplex SCI(1)III(2)IV(1) and megacomplex MCI(2)III(2)IV(2)). Interacts with PET100.

The protein resides in the mitochondrion inner membrane. It functions in the pathway energy metabolism; oxidative phosphorylation. Its function is as follows. Component of the cytochrome c oxidase, the last enzyme in the mitochondrial electron transport chain which drives oxidative phosphorylation. The respiratory chain contains 3 multisubunit complexes succinate dehydrogenase (complex II, CII), ubiquinol-cytochrome c oxidoreductase (cytochrome b-c1 complex, complex III, CIII) and cytochrome c oxidase (complex IV, CIV), that cooperate to transfer electrons derived from NADH and succinate to molecular oxygen, creating an electrochemical gradient over the inner membrane that drives transmembrane transport and the ATP synthase. Cytochrome c oxidase is the component of the respiratory chain that catalyzes the reduction of oxygen to water. Electrons originating from reduced cytochrome c in the intermembrane space (IMS) are transferred via the dinuclear copper A center (CU(A)) of subunit 2 and heme A of subunit 1 to the active site in subunit 1, a binuclear center (BNC) formed by heme A3 and copper B (CU(B)). The BNC reduces molecular oxygen to 2 water molecules using 4 electrons from cytochrome c in the IMS and 4 protons from the mitochondrial matrix. The sequence is that of Cytochrome c oxidase subunit 7A2, mitochondrial (COX7A2) from Canis lupus familiaris (Dog).